We begin with the raw amino-acid sequence, 204 residues long: Viral interleukin-6 homolog (204 aa).

Positions 1 to 22 (MRWFKLWSILLVGSLLVSGTRG) are cleaved as a signal peptide.

Belongs to the IL-6 superfamily. As to quaternary structure, interacts with host IL6ST.

Functionally, initiates signal transduction through binding to interleukin-6 receptor subunit beta IL6ST, independently of the cognate IL6 receptor IL6R. In infected primary effusion lymphoma cells, promotes proliferation of cells, protects them from apoptosis, and promotes immune evasion of interferon activity. Also drives blood to lymphatic endothelial cell differentiation. The protein is Viral interleukin-6 homolog (K2) of Homo sapiens (Human).